The sequence spans 56 residues: MGHQNIWYSHPRKYGQGSRSCRACSNRHGLIRKYGLNICRQCFREYANDIGFKKLD.

Cys-21, Cys-24, Cys-39, and Cys-42 together coordinate Zn(2+).

Belongs to the universal ribosomal protein uS14 family. Component of the 40S small ribosomal subunit. Requires Zn(2+) as cofactor.

Its subcellular location is the cytoplasm. It localises to the cytosol. The protein resides in the rough endoplasmic reticulum. The polypeptide is Small ribosomal subunit protein uS14 (RpS29) (Scarabaeus laticollis (Scarab dung beetle)).